The chain runs to 102 residues: Urease subunit beta (102 aa).

This sequence belongs to the urease beta subunit family. In terms of assembly, heterotrimer of UreA (gamma), UreB (beta) and UreC (alpha) subunits. Three heterotrimers associate to form the active enzyme.

It localises to the cytoplasm. It carries out the reaction urea + 2 H2O + H(+) = hydrogencarbonate + 2 NH4(+). The protein operates within nitrogen metabolism; urea degradation; CO(2) and NH(3) from urea (urease route): step 1/1. This is Urease subunit beta from Acinetobacter baumannii (strain AB307-0294).